A 68-amino-acid polypeptide reads, in one-letter code: Beta-defensin 1 (68 aa).

An N-terminal signal peptide occupies residues M1–G21. Positions D22 to S32 are excised as a propeptide. Disulfide bonds link C37/C66, C44/C59, and C49/C67.

The protein belongs to the beta-defensin family. As to quaternary structure, monomer. Homodimer.

The protein localises to the secreted. Its subcellular location is the membrane. Has bactericidal activity. May act as a ligand for C-C chemokine receptor CCR6. Positively regulates the sperm motility and bactericidal activity in a CCR6-dependent manner. Binds to CCR6 and triggers Ca2+ mobilization in the sperm which is important for its motility. In Allochrocebus preussi (Preuss's monkey), this protein is Beta-defensin 1 (DEFB1).